Reading from the N-terminus, the 115-residue chain is NADH-ubiquinone oxidoreductase chain 3 (115 aa).

Transmembrane regions (helical) follow at residues 3-23 (LMLA…IAFW), 55-75 (FFLV…LLPL), and 84-104 (LNTM…SLAY).

It belongs to the complex I subunit 3 family. Core subunit of respiratory chain NADH dehydrogenase (Complex I) which is composed of 45 different subunits. Interacts with TMEM186. Interacts with TMEM242.

It localises to the mitochondrion inner membrane. It carries out the reaction a ubiquinone + NADH + 5 H(+)(in) = a ubiquinol + NAD(+) + 4 H(+)(out). Functionally, core subunit of the mitochondrial membrane respiratory chain NADH dehydrogenase (Complex I) which catalyzes electron transfer from NADH through the respiratory chain, using ubiquinone as an electron acceptor. Essential for the catalytic activity of complex I. This chain is NADH-ubiquinone oxidoreductase chain 3, found in Bos indicus (Zebu).